Consider the following 60-residue polypeptide: Large ribosomal subunit protein bL32 (60 aa).

This sequence belongs to the bacterial ribosomal protein bL32 family.

This chain is Large ribosomal subunit protein bL32, found in Oenococcus oeni (strain ATCC BAA-331 / PSU-1).